Consider the following 312-residue polypeptide: MQISKFFKFVFISVSLCGSLLFPQMANAYPVFAQQAYDNPREATGRIVCANCHLAQKPTEVEVPQAVLPDTVFEAVVNIPYDTKVQQVTASGTPGPLNVGAVVILPEGFKLAPKGRMSDELKAKTKGVFVQPYSKTRPNILVVGPILGEKNREVTFPILAPDPAQDKSVHYLNYPIYVGANRGRGQVYPSGEKSNNNTFTSTAAGKVTAIEAGDKGTTRVTIQTAAGEAKEQTVPAGLKVSVKTGDVIQADQALSYNPNVGGFGQAETEVILQSPNRVKGMIAFFFTVTVAQILLVLKKKQFEKVQAAEMNF.

Positions M1–A28 are cleaved as a signal peptide. The heme site is built by Y29, C49, C52, and H53. A helical membrane pass occupies residues V278–K298.

The protein belongs to the cytochrome f family. The 4 large subunits of the cytochrome b6-f complex are cytochrome b6, subunit IV (17 kDa polypeptide, petD), cytochrome f and the Rieske protein, while the 4 small subunits are PetG, PetL, PetM and PetN. The complex functions as a dimer. It depends on heme as a cofactor.

It is found in the plastid. The protein resides in the chloroplast thylakoid membrane. Component of the cytochrome b6-f complex, which mediates electron transfer between photosystem II (PSII) and photosystem I (PSI), cyclic electron flow around PSI, and state transitions. The polypeptide is Cytochrome f (Emiliania huxleyi (Coccolithophore)).